The chain runs to 375 residues: Growth/differentiation factor 8 (375 aa).

The first 18 residues, 1 to 18, serve as a signal peptide directing secretion; the sequence is MQKLQIFVYIYLFMLTVA. The propeptide occupies 19-266; sequence GPVDLNENSE…VTDTPKRARR (248 aa). Residues N48 and N71 are each glycosylated (N-linked (GlcNAc...) asparagine). Cystine bridges form between C272–C282, C281–C340, C309–C372, and C313–C374.

This sequence belongs to the TGF-beta family. Homodimer; disulfide-linked. Interacts with WFIKKN2, leading to inhibit its activity. Interacts with FSTL3. In terms of processing, synthesized as large precursor molecule that undergoes proteolytic cleavage to generate an N-terminal propeptide and a disulfide linked C-terminal dimer, which is the biologically active molecule. The circulating form consists of a latent complex of the C-terminal dimer and other proteins, including its propeptide, which maintain the C-terminal dimer in a latent, inactive state. Ligand activation requires additional cleavage of the prodomain by a tolloid-like metalloproteinase.

Its subcellular location is the secreted. In terms of biological role, acts specifically as a negative regulator of skeletal muscle growth. In Sylvicapra grimmia (Grey duiker), this protein is Growth/differentiation factor 8 (MSTN).